Reading from the N-terminus, the 279-residue chain is Tryptophan synthase alpha chain (279 aa).

Residues Glu-50 and Asp-61 each act as proton acceptor in the active site.

This sequence belongs to the TrpA family. As to quaternary structure, tetramer of two alpha and two beta chains.

The enzyme catalyses (1S,2R)-1-C-(indol-3-yl)glycerol 3-phosphate + L-serine = D-glyceraldehyde 3-phosphate + L-tryptophan + H2O. It participates in amino-acid biosynthesis; L-tryptophan biosynthesis; L-tryptophan from chorismate: step 5/5. Functionally, the alpha subunit is responsible for the aldol cleavage of indoleglycerol phosphate to indole and glyceraldehyde 3-phosphate. The sequence is that of Tryptophan synthase alpha chain from Azorhizobium caulinodans (strain ATCC 43989 / DSM 5975 / JCM 20966 / LMG 6465 / NBRC 14845 / NCIMB 13405 / ORS 571).